The following is a 132-amino-acid chain: UPF0146 protein PF0123 (132 aa).

The protein belongs to the UPF0146 family.

The chain is UPF0146 protein PF0123 from Pyrococcus furiosus (strain ATCC 43587 / DSM 3638 / JCM 8422 / Vc1).